Consider the following 256-residue polypeptide: Protein crossbronx-like (256 aa).

The region spanning 17–179 is the UBC core domain; sequence NQGYQVLAEY…AKASIVWSWK (163 aa).

The protein belongs to the ubiquitin-conjugating enzyme family. FTS subfamily.

The protein is Protein crossbronx-like of Drosophila mojavensis (Fruit fly).